The sequence spans 445 residues: 3-phosphoshikimate 1-carboxyvinyltransferase (445 aa).

The disordered stretch occupies residues 1 to 25 (MSHSDQTSPLEARKSAALSGTARVP). Positions 28, 29, and 33 each coordinate 3-phosphoshikimate. Lysine 28 provides a ligand contact to phosphoenolpyruvate. The phosphoenolpyruvate site is built by glycine 101 and arginine 129. Positions 175, 177, 328, and 355 each coordinate 3-phosphoshikimate. Glutamine 177 serves as a coordination point for phosphoenolpyruvate. Aspartate 328 serves as the catalytic Proton acceptor. Positions 359 and 402 each coordinate phosphoenolpyruvate.

Belongs to the EPSP synthase family. In terms of assembly, monomer.

It localises to the cytoplasm. It carries out the reaction 3-phosphoshikimate + phosphoenolpyruvate = 5-O-(1-carboxyvinyl)-3-phosphoshikimate + phosphate. The protein operates within metabolic intermediate biosynthesis; chorismate biosynthesis; chorismate from D-erythrose 4-phosphate and phosphoenolpyruvate: step 6/7. In terms of biological role, catalyzes the transfer of the enolpyruvyl moiety of phosphoenolpyruvate (PEP) to the 5-hydroxyl of shikimate-3-phosphate (S3P) to produce enolpyruvyl shikimate-3-phosphate and inorganic phosphate. The chain is 3-phosphoshikimate 1-carboxyvinyltransferase from Rhodopseudomonas palustris (strain BisB5).